Reading from the N-terminus, the 376-residue chain is D-alanine--D-alanine ligase (376 aa).

The region spanning lysine 155–aspartate 361 is the ATP-grasp domain. An ATP-binding site is contributed by glutamate 188–glutamate 243. 3 residues coordinate Mg(2+): aspartate 314, glutamate 328, and asparagine 330.

The protein belongs to the D-alanine--D-alanine ligase family. Mg(2+) is required as a cofactor. It depends on Mn(2+) as a cofactor.

It is found in the cytoplasm. It catalyses the reaction 2 D-alanine + ATP = D-alanyl-D-alanine + ADP + phosphate + H(+). Its pathway is cell wall biogenesis; peptidoglycan biosynthesis. Its function is as follows. Cell wall formation. The sequence is that of D-alanine--D-alanine ligase from Acetivibrio thermocellus (strain ATCC 27405 / DSM 1237 / JCM 9322 / NBRC 103400 / NCIMB 10682 / NRRL B-4536 / VPI 7372) (Clostridium thermocellum).